A 994-amino-acid chain; its full sequence is Valine--tRNA ligase (994 aa).

Positions 43–53 match the 'HIGH' region motif; that stretch reads PNVTGTLHMGH. Positions 329-345 are enriched in polar residues; that stretch reads QSGMPSGATSDTTNTPS. The tract at residues 329 to 355 is disordered; it reads QSGMPSGATSDTTNTPSDPEASSAANQ. The 'KMSKS' region motif lies at 585–589; that stretch reads KMSKS. Position 588 (lysine 588) interacts with ATP. The segment at 692–714 is disordered; it reads AHSPAQHQAGQDGQDAPRTPQPR. Residues 696 to 707 are compositionally biased toward low complexity; it reads AQHQAGQDGQDA. Residues 928-994 adopt a coiled-coil conformation; sequence LIDVDAERVR…NGLRERRATL (67 aa).

This sequence belongs to the class-I aminoacyl-tRNA synthetase family. ValS type 1 subfamily. In terms of assembly, monomer.

The protein resides in the cytoplasm. The catalysed reaction is tRNA(Val) + L-valine + ATP = L-valyl-tRNA(Val) + AMP + diphosphate. Its function is as follows. Catalyzes the attachment of valine to tRNA(Val). As ValRS can inadvertently accommodate and process structurally similar amino acids such as threonine, to avoid such errors, it has a 'posttransfer' editing activity that hydrolyzes mischarged Thr-tRNA(Val) in a tRNA-dependent manner. The sequence is that of Valine--tRNA ligase from Xylella fastidiosa (strain 9a5c).